We begin with the raw amino-acid sequence, 100 residues long: Aspartyl/glutamyl-tRNA(Asn/Gln) amidotransferase subunit C (100 aa).

Belongs to the GatC family. Heterotrimer of A, B and C subunits.

It catalyses the reaction L-glutamyl-tRNA(Gln) + L-glutamine + ATP + H2O = L-glutaminyl-tRNA(Gln) + L-glutamate + ADP + phosphate + H(+). The catalysed reaction is L-aspartyl-tRNA(Asn) + L-glutamine + ATP + H2O = L-asparaginyl-tRNA(Asn) + L-glutamate + ADP + phosphate + 2 H(+). Functionally, allows the formation of correctly charged Asn-tRNA(Asn) or Gln-tRNA(Gln) through the transamidation of misacylated Asp-tRNA(Asn) or Glu-tRNA(Gln) in organisms which lack either or both of asparaginyl-tRNA or glutaminyl-tRNA synthetases. The reaction takes place in the presence of glutamine and ATP through an activated phospho-Asp-tRNA(Asn) or phospho-Glu-tRNA(Gln). This Staphylococcus epidermidis (strain ATCC 35984 / DSM 28319 / BCRC 17069 / CCUG 31568 / BM 3577 / RP62A) protein is Aspartyl/glutamyl-tRNA(Asn/Gln) amidotransferase subunit C.